A 293-amino-acid polypeptide reads, in one-letter code: Proline iminopeptidase (293 aa).

In terms of domain architecture, AB hydrolase-1 spans 28 to 277; it reads PLVLLHGGPG…NCSHMSFVQK (250 aa). Serine 105 (nucleophile) is an active-site residue. Aspartate 244 is an active-site residue. Catalysis depends on histidine 271, which acts as the Proton donor.

This sequence belongs to the peptidase S33 family.

It localises to the cell envelope. The catalysed reaction is Release of N-terminal proline from a peptide.. In terms of biological role, releases the N-terminal proline from various substrates. This is Proline iminopeptidase from Lactobacillus acidophilus (strain ATCC 700396 / NCK56 / N2 / NCFM).